A 332-amino-acid polypeptide reads, in one-letter code: MTKITVFGMGSFGTALANVLAENGHDVLMWGKNQDAVDELNTCHTNKKYLKYAKLDVNIIATSDMTKAIQFADIYLMALPTKAMREVATQINDKLTSKKTFIHVAKGIENGTFKRVSEMIEDSISPEYNAGIGVLSGPSHAEEVVVKQPTTVAASSKDKNVSKLTQDLFMNDYLRVYTNDDLIGVELGGALKNIIAVASGIVAGIGYGDNAKAALMTRGLAEISRLGEKLGADPMTFLGLGGIGDLIVTCTSTHSRNFTLGYKLGQGESMDQALSEMNMVVEGIYTTKSVYHLAKEKNVDMPITNALYRVLFENISVKECVKDLMERDKKSE.

Serine 11, phenylalanine 12, lysine 32, and lysine 106 together coordinate NADPH. Sn-glycerol 3-phosphate contacts are provided by lysine 106, glycine 137, and serine 139. Residue alanine 141 participates in NADPH binding. Lysine 192, aspartate 245, serine 255, arginine 256, and asparagine 257 together coordinate sn-glycerol 3-phosphate. Residue lysine 192 is the Proton acceptor of the active site. Position 256 (arginine 256) interacts with NADPH. Residues valine 280 and glutamate 282 each contribute to the NADPH site.

Belongs to the NAD-dependent glycerol-3-phosphate dehydrogenase family.

It is found in the cytoplasm. It carries out the reaction sn-glycerol 3-phosphate + NAD(+) = dihydroxyacetone phosphate + NADH + H(+). The enzyme catalyses sn-glycerol 3-phosphate + NADP(+) = dihydroxyacetone phosphate + NADPH + H(+). The protein operates within membrane lipid metabolism; glycerophospholipid metabolism. Catalyzes the reduction of the glycolytic intermediate dihydroxyacetone phosphate (DHAP) to sn-glycerol 3-phosphate (G3P), the key precursor for phospholipid synthesis. The chain is Glycerol-3-phosphate dehydrogenase [NAD(P)+] from Staphylococcus aureus (strain bovine RF122 / ET3-1).